The chain runs to 150 residues: Large ribosomal subunit protein uL15 (150 aa).

The interval 1–55 is disordered; the sequence is MADNEILQMHDLKPAPGAKKDRTRVGRGEGSKGKTAGRGAKGQTKRNHVRPGFEG. Over residues 8 to 32 the composition is skewed to basic and acidic residues; sequence QMHDLKPAPGAKKDRTRVGRGEGSK.

The protein belongs to the universal ribosomal protein uL15 family. As to quaternary structure, part of the 50S ribosomal subunit.

Binds to the 23S rRNA. The chain is Large ribosomal subunit protein uL15 from Bifidobacterium longum (strain DJO10A).